Here is a 128-residue protein sequence, read N- to C-terminus: Nucleoside diphosphate kinase B (128 aa).

N-acetylmethionine is present on Met1. ATP is bound by residues Lys9, Phe39, Thr70, Arg81, and Asn91. His94 acts as the Pros-phosphohistidine intermediate in catalysis.

This sequence belongs to the NDK family. It depends on Mg(2+) as a cofactor.

Its subcellular location is the cytoplasm. It localises to the nucleus. The protein localises to the cell projection. The protein resides in the lamellipodium. It is found in the ruffle. It catalyses the reaction a 2'-deoxyribonucleoside 5'-diphosphate + ATP = a 2'-deoxyribonucleoside 5'-triphosphate + ADP. It carries out the reaction a ribonucleoside 5'-diphosphate + ATP = a ribonucleoside 5'-triphosphate + ADP. Major role in the synthesis of nucleoside triphosphates other than ATP. In Merluccius australis australis (Austral hake), this protein is Nucleoside diphosphate kinase B (nme2).